A 531-amino-acid polypeptide reads, in one-letter code: Probable calcium-binding mitochondrial carrier F17E5.2 (531 aa).

EF-hand domains lie at 70 to 105 (EKEK…QAHI), 106 to 135 (PASV…NYVI), 136 to 171 (AHEA…MGVN), and 172 to 207 (LDDQ…YPST). Ca(2+) contacts are provided by D83, D85, D87, S89, and D94. 5 residues coordinate Ca(2+): D149, N151, D153, E155, and E160. 3 Solcar repeats span residues 242-328 (GVWW…IKRW), 338-424 (LSTI…LKSM), and 435-525 (PGVL…VRKQ). 6 consecutive transmembrane segments (helical) span residues 248–265 (LVAG…TAPF), 303–322 (GNGI…FMCY), 348–361 (SSAG…IYPM), 399–418 (GYLP…LTVY), 441–458 (LACG…SYPL), and 500–517 (GITP…ISYV).

This sequence belongs to the mitochondrial carrier (TC 2.A.29) family.

The protein resides in the mitochondrion inner membrane. In terms of biological role, calcium-dependent mitochondrial solute carrier. The sequence is that of Probable calcium-binding mitochondrial carrier F17E5.2 from Caenorhabditis elegans.